The following is a 78-amino-acid chain: Cytochrome b-c1 complex subunit 10, mitochondrial (78 aa).

Over 1–26 (MVSYVKGPAYKALSHFGKLNAPLVRS) the chain is Mitochondrial matrix. The helical transmembrane segment at 27–46 (YIPNLVFWGAAAGGAVATFT) threads the bilayer. Residues 47–78 (EGVPLFQKTFYEKIPFFGQHWIYNPDPEDVPV) lie on the Mitochondrial intermembrane side of the membrane.

This sequence belongs to the UQCR11/QCR10 family. In terms of assembly, component of the ubiquinol-cytochrome c oxidoreductase (cytochrome b-c1 complex, complex III, CIII), a multisubunit enzyme composed of 10 subunits. The complex is composed of 3 respiratory subunits cytochrome b (COB), cytochrome c1 (CYT1) and Rieske protein (RIP1), 2 core protein subunits COR1 and QCR2, and 5 low-molecular weight protein subunits QCR6, QCR7, QCR8, QCR9 and QCR10. The complex exists as an obligatory dimer and forms supercomplexes (SCs) in the inner mitochondrial membrane with a monomer or a dimer of cytochrome c oxidase (complex IV, CIV), resulting in 2 different assemblies (supercomplexes III(2)IV and III(2)IV(2)).

It is found in the mitochondrion inner membrane. Component of the ubiquinol-cytochrome c oxidoreductase, a multisubunit transmembrane complex that is part of the mitochondrial electron transport chain which drives oxidative phosphorylation. The complex plays an important role in the uptake of multiple carbon sources present in different host niches. The polypeptide is Cytochrome b-c1 complex subunit 10, mitochondrial (Candida albicans (strain SC5314 / ATCC MYA-2876) (Yeast)).